The primary structure comprises 84 residues: Cell division topological specificity factor (84 aa).

This sequence belongs to the MinE family.

Its function is as follows. Prevents the cell division inhibition by proteins MinC and MinD at internal division sites while permitting inhibition at polar sites. This ensures cell division at the proper site by restricting the formation of a division septum at the midpoint of the long axis of the cell. This Desulfotalea psychrophila (strain LSv54 / DSM 12343) protein is Cell division topological specificity factor.